The chain runs to 156 residues: Endogenous retrovirus group K member 9 Pro protein (156 aa).

The region spanning Phe-21 to Leu-96 is the Peptidase A2 domain. The active site involves Asp-26. Positions Tyr-111 to Phe-156 constitute a G-patch domain.

This sequence belongs to the peptidase A2 family. HERV class-II K(HML-2) subfamily. In terms of assembly, active as a homodimer. Autoproteolytically processed at the N-terminus. Expected C-terminal autoprocessing not detected. The sequence shown is that of the processed Pro protein.

The enzyme catalyses Processing at the authentic HIV-1 PR recognition site and release of the mature p17 matrix and the p24 capsid protein, as a result of the cleavage of the -SQNY-|-PIVQ- cleavage site.. Retroviral proteases have roles in the processing of the primary translation products and the maturation of the viral particle. Endogenous Pro proteins may have kept, lost or modified their original function during evolution. This chain is Endogenous retrovirus group K member 9 Pro protein (ERVK-9), found in Homo sapiens (Human).